The chain runs to 1806 residues: Focadhesin (1806 aa).

Residues 733–760 (ARPIPKQPEVEDEVKQNEEENEEEEDIS) form a disordered region.

The protein localises to the cell junction. It localises to the focal adhesion. It is found in the cytoplasm. The protein resides in the cytosol. Functionally, required for the maintenance of SKIC2 and SKIC3 proteostatic levels in the liver. May be involved in the regulation of RNA degradation by the exosome complex. The protein is Focadhesin (focad) of Danio rerio (Zebrafish).